The primary structure comprises 341 residues: Major histocompatibility complex class I-related protein 1 (341 aa).

Residues 1 to 22 (MGELMAFLLPLIIVLMVKHSDS) form the signal peptide. The interval 23–109 (RTHSLRYFRL…KRLQRHYNHS (87 aa)) is alpha-1. Residues 23-201 (RTHSLRYFRL…EYGKDTLQRT (179 aa)) are antigen-binding cleft. Residues 23–302 (RTHSLRYFRL…QESETIPLVM (280 aa)) are Extracellular-facing. Arginine 31, serine 46, and lysine 65 together coordinate 5-(2-oxoethylideneamino)-6-(D-ribitylamino)uracil. 5-(2-oxopropylideneamino)-6-(D-ribitylamino)uracil is bound by residues arginine 31, serine 46, and lysine 65. Residues arginine 31, serine 46, and lysine 65 each coordinate 7-hydroxy-6-methyl-8-(1-D-ribityl)lumazine. Arginine 31 serves as a coordination point for 8-(9H-purin-6-yl)-2-oxa-8-azabicyclo[3.3.1]nona-3,6-diene-4,6-dicarbaldehyde. 2 residues coordinate 8-(9H-purin-6-yl)-2-oxa-8-azabicyclo[3.3.1]nona-3,6-diene-4,6-dicarbaldehyde: lysine 65 and histidine 80. Residue lysine 65 coordinates 2-amino-4-oxopteridine-6-carbaldehyde. Pyridoxal is bound at residue lysine 65. N-linked (GlcNAc...) asparagine glycosylation is present at asparagine 107. The segment at 110–201 (GSHTYQRMIG…EYGKDTLQRT (92 aa)) is alpha-2. Positions 116, 174, and 175 each coordinate 5-(2-oxoethylideneamino)-6-(D-ribitylamino)uracil. Residues arginine 116, tyrosine 174, and glutamine 175 each contribute to the 5-(2-oxopropylideneamino)-6-(D-ribitylamino)uracil site. 3 residues coordinate 7-hydroxy-6-methyl-8-(1-D-ribityl)lumazine: arginine 116, tyrosine 174, and glutamine 175. Arginine 116 is an 8-(9H-purin-6-yl)-2-oxa-8-azabicyclo[3.3.1]nona-3,6-diene-4,6-dicarbaldehyde binding site. Disulfide bonds link cysteine 120–cysteine 183 and cysteine 222–cysteine 278. The interval 202-293 (EPPLVRVNRK…GVHMVLQVPQ (92 aa)) is alpha-3. In terms of domain architecture, Ig-like C1-type spans 203-299 (PPLVRVNRKE…QVPQESETIP (97 aa)). The tract at residues 294 to 302 (ESETIPLVM) is connecting peptide. A helical membrane pass occupies residues 303–323 (KAVSGSIVLVIVLAGVGVLVW). Over 324-341 (RRRPREQNGAIYLPTPDR) the chain is Cytoplasmic.

It belongs to the MHC class I family. In terms of assembly, heterotrimer that consists of MR1, B2M and a metabolite antigen. Major classes of metabolite ligands presented by MR1 include riboflavin-related antigens, pyrimidines and ribityl lumazines, nucleobase adducts and folate derivatives. Forms reversible covalent Schiff base complexes with microbial pyrimidine-based metabolite, which serves as a molecular switch triggering complete folding, stable association with B2M and translocation of the ternary complex from endoplasmic reticulum to the plasma membrane. Alternatively, forms non-Schiff base complexes with ribityl lumazines. On antigen-presenting cells, the ternary complex interacts with TCR on MR1-restricted T cells, predominantly represented by CD8-positive and CD4- and CD8-double negative MAIT cell subsets. Interacts with TAPBP and TAPBPL chaperones in the endoplasmic reticulum. TAPBP associated or not with MHC class I peptide loading complex binds ligand-free MR1 or MR1-B2M complex, providing for stable MR1 pools ready for metabolite antigen processing. TAPBPL interacts with MR1 in a ligand-independent way; this interaction may stabilize MR1 pool and facilitate ligand loading and dissociation. MR1-B2M heterodimer adopts a topology similar to classical MHC class I molecules, with alpha-1 and alpha-2 domains of MR1 forming the antigen-binding cleft composed of two alpha-helices resting on a floor of 7-stranded anti-parallel beta-pleated sheet. The ribityl moiety of pyrimidine-based antigens is recognized by Tyr-95 residue in the CDR3 alpha loop of the invariant TRAV1-2 TCR. As to quaternary structure, homodimerizes and does not associate with B2M. In terms of processing, N-glycosylated. As to expression, ubiquitous. Low expression is detected in peripheral blood B cells, T cells, monocytes and in bronchial epithelial cells (at protein level). Expressed in plasmablasts or plasma B cells in the lamina propria of ileum, appendix and colon (at protein level). Highly expressed on a subset of CD45-positive CD3-positive thymocytes (at protein level).

The protein resides in the cell membrane. It localises to the endoplasmic reticulum membrane. The protein localises to the golgi apparatus membrane. It is found in the early endosome membrane. Its subcellular location is the late endosome membrane. The protein resides in the secreted. Inhibited by pterin-based metabolites such as 6-formylpterin (6-FP, a product of folic acid photodegradation). 6-FP competitively inhibits MAIT cell activation by 5-OP-RU. Modulated by commonly prescribed anti-inflammatory drug metabolites. Inhibited by salicilates such as 3-formylsalicylic and 5-formylsalicylic acids. Activated by diclofenac and/or its hydroxy metabolites. Its function is as follows. Antigen-presenting molecule specialized in displaying microbial pyrimidine-based metabolites to alpha-beta T cell receptors (TCR) on innate-type mucosal-associated invariant T (MAIT) cells. In complex with B2M preferentially presents riboflavin-derived metabolites to semi-invariant TRAV1.2 TCRs on MAIT cells, guiding immune surveillance of the microbial metabolome at mucosal epithelial barriers. Signature pyrimidine-based microbial antigens are generated via non-enzymatic condensation of metabolite intermediates of the riboflavin pathway with by-products arising from other metabolic pathways such as glycolysis. Typical potent antigenic metabolites are 5-(2-oxoethylideneamino)-6-D-ribitylaminouracil (5-OE-RU) and 5-(2-oxopropylideneamino)-6-D-ribitylaminouracil (5-OP-RU), products of condensation of 5-amino-6-D-ribityaminouracil (5-A-RU) with glyoxal or methylglyoxal by-products, respectively. May present microbial antigens to various TRAV1-2-negative MAIT cell subsets, providing for unique recognition of diverse microbes, including pathogens that do not synthesize riboflavin. Upon antigen recognition, elicits rapid innate-type MAIT cell activation to eliminate pathogenic microbes by directly killing infected cells. During T cell development, drives thymic selection and post-thymic terminal differentiation of MAIT cells in a process dependent on commensal microflora. Acts as an immune sensor of cancer cell metabolome. May present a tumor-specific or -associated metabolite essential for cancer cell survival to a 'pan-cancer' TCR consisting of TRAV38.2-DV8*TRAJ31 alpha chain paired with a TRBV25.1*TRBJ2.3 beta chain on a non-MAIT CD8-positive T cell clone (MC.7.G5), triggering T cell-mediated killing of a wide range of cancer cell types. In terms of biological role, allele MR1*01: Presents microbial-derived metabolite 5-OP-RU to semi-invariant TRAV1.2-TRAJ33-TRBV6.1 (A-F7) TCR on MAIT cells. Presents nucleobase carbonyl adducts generated during oxidative stress. Captures M3Ade, a nucleobase adduct composed of one adenine modified by a malondialdehyde trimer, for recognition by MR1-restricted T cell clones expressing a polyclonal TCR repertoire. Displays moderate binding affinity toward tumor-enriched pyridoxal and pyridoxal 5'-phosphate antigens. Functionally, allele MR1*04: Presents tumor-enriched metabolite pyridoxal to pan-cancer 7.G5 TCR on T cells enabling preferential recognition of cancer cells. May act as an alloantigen. The protein is Major histocompatibility complex class I-related protein 1 of Homo sapiens (Human).